We begin with the raw amino-acid sequence, 119 residues long: HTH-type transcriptional regulator SarX (119 aa).

Positions 55-78 (LKTAMDELDLSRTKLLVSIRRLIE) form a DNA-binding region, H-T-H motif.

The protein belongs to the SarA family.

The protein localises to the cytoplasm. Functionally, involved in the regulation of virulence genes. Acts as a repressor of the agr locus and consequently targets genes regulated by the agr system such as sspA, hla and hlb. Binds directly to the agr promoter region. The protein is HTH-type transcriptional regulator SarX (sarX) of Staphylococcus aureus (strain USA300).